The primary structure comprises 252 residues: Hydroxyacylglutathione hydrolase (252 aa).

7 residues coordinate Zn(2+): H54, H56, D58, H59, H111, D128, and H166.

It belongs to the metallo-beta-lactamase superfamily. Glyoxalase II family. In terms of assembly, monomer. It depends on Zn(2+) as a cofactor.

It carries out the reaction an S-(2-hydroxyacyl)glutathione + H2O = a 2-hydroxy carboxylate + glutathione + H(+). Its pathway is secondary metabolite metabolism; methylglyoxal degradation; (R)-lactate from methylglyoxal: step 2/2. Functionally, thiolesterase that catalyzes the hydrolysis of S-D-lactoyl-glutathione to form glutathione and D-lactic acid. In Aliivibrio salmonicida (strain LFI1238) (Vibrio salmonicida (strain LFI1238)), this protein is Hydroxyacylglutathione hydrolase.